Reading from the N-terminus, the 370-residue chain is Dual-specificity RNA methyltransferase RlmN (370 aa).

Glu-93 acts as the Proton acceptor in catalysis. In terms of domain architecture, Radical SAM core spans 99–337 (EEGRGTLCVS…VTTVRKTRGD (239 aa)). Residues Cys-106 and Cys-343 are joined by a disulfide bond. [4Fe-4S] cluster is bound by residues Cys-113, Cys-117, and Cys-120. S-adenosyl-L-methionine is bound by residues 167 to 168 (GE), Ser-199, 221 to 223 (SLH), and Asn-300. Cys-343 acts as the S-methylcysteine intermediate in catalysis.

Belongs to the radical SAM superfamily. RlmN family. [4Fe-4S] cluster is required as a cofactor.

The protein localises to the cytoplasm. It carries out the reaction adenosine(2503) in 23S rRNA + 2 reduced [2Fe-2S]-[ferredoxin] + 2 S-adenosyl-L-methionine = 2-methyladenosine(2503) in 23S rRNA + 5'-deoxyadenosine + L-methionine + 2 oxidized [2Fe-2S]-[ferredoxin] + S-adenosyl-L-homocysteine. It catalyses the reaction adenosine(37) in tRNA + 2 reduced [2Fe-2S]-[ferredoxin] + 2 S-adenosyl-L-methionine = 2-methyladenosine(37) in tRNA + 5'-deoxyadenosine + L-methionine + 2 oxidized [2Fe-2S]-[ferredoxin] + S-adenosyl-L-homocysteine. Its function is as follows. Specifically methylates position 2 of adenine 2503 in 23S rRNA and position 2 of adenine 37 in tRNAs. m2A2503 modification seems to play a crucial role in the proofreading step occurring at the peptidyl transferase center and thus would serve to optimize ribosomal fidelity. This Francisella tularensis subsp. mediasiatica (strain FSC147) protein is Dual-specificity RNA methyltransferase RlmN.